We begin with the raw amino-acid sequence, 1117 residues long: Protein rliB (1117 aa).

An N-terminal signal peptide occupies residues 1–23 (MKNINNKILKIFILFLAICSVKS). N-linked (GlcNAc...) asparagine glycosylation is found at Asn-136, Asn-195, Asn-279, and Asn-318. The G8 domain occupies 266-392 (STWSNNLVPQ…YHNSWTKLAS (127 aa)). PbH1 repeat units lie at residues 522–544 (VQKSYISDCVVTKSYYRCYTIHG) and 545–567 (TNNLTLTRNVAFDVNGHCYYLED). N-linked (GlcNAc...) asparagine glycans are attached at residues Asn-547 and Asn-605. Residues 621 to 642 (NAYNTIIGNSASGGWAGFSFPN) form a PbH1 3 repeat. Asn-728, Asn-845, Asn-1030, Asn-1044, Asn-1091, and Asn-1107 each carry an N-linked (GlcNAc...) asparagine glycan.

This sequence belongs to the comF family.

The protein resides in the secreted. This Dictyostelium discoideum (Social amoeba) protein is Protein rliB (rliB).